The following is a 348-amino-acid chain: Probable dual-specificity RNA methyltransferase RlmN (348 aa).

Glu95 serves as the catalytic Proton acceptor. The Radical SAM core domain maps to 101-335; sequence SGNRLTICVS…VSLRASRGLD (235 aa). The cysteines at positions 108 and 340 are disulfide-linked. 3 residues coordinate [4Fe-4S] cluster: Cys115, Cys119, and Cys122. S-adenosyl-L-methionine contacts are provided by residues 162 to 163, Ser192, 221 to 223, and Asn297; these read GE and SLH. Residue Cys340 is the S-methylcysteine intermediate of the active site.

It belongs to the radical SAM superfamily. RlmN family. [4Fe-4S] cluster serves as cofactor.

It is found in the cytoplasm. The enzyme catalyses adenosine(2503) in 23S rRNA + 2 reduced [2Fe-2S]-[ferredoxin] + 2 S-adenosyl-L-methionine = 2-methyladenosine(2503) in 23S rRNA + 5'-deoxyadenosine + L-methionine + 2 oxidized [2Fe-2S]-[ferredoxin] + S-adenosyl-L-homocysteine. It carries out the reaction adenosine(37) in tRNA + 2 reduced [2Fe-2S]-[ferredoxin] + 2 S-adenosyl-L-methionine = 2-methyladenosine(37) in tRNA + 5'-deoxyadenosine + L-methionine + 2 oxidized [2Fe-2S]-[ferredoxin] + S-adenosyl-L-homocysteine. Its function is as follows. Specifically methylates position 2 of adenine 2503 in 23S rRNA and position 2 of adenine 37 in tRNAs. This chain is Probable dual-specificity RNA methyltransferase RlmN, found in Prochlorococcus marinus (strain SARG / CCMP1375 / SS120).